The following is a 221-amino-acid chain: UPF0758 protein ECA0145 (221 aa).

In terms of domain architecture, MPN spans 99–221 (AMLNPEATGQ…FVSFAERGWI (123 aa)). Zn(2+) contacts are provided by H170, H172, and D183. The JAMM motif motif lies at 170–183 (HNHPSGKAEPSQAD).

The protein belongs to the UPF0758 family. YicR subfamily.

The protein is UPF0758 protein ECA0145 of Pectobacterium atrosepticum (strain SCRI 1043 / ATCC BAA-672) (Erwinia carotovora subsp. atroseptica).